The following is a 329-amino-acid chain: Glucokinase (329 aa).

G13 to T18 provides a ligand contact to ATP.

The protein belongs to the bacterial glucokinase family.

The protein localises to the cytoplasm. The enzyme catalyses D-glucose + ATP = D-glucose 6-phosphate + ADP + H(+). The protein is Glucokinase of Caulobacter sp. (strain K31).